The sequence spans 234 residues: Large ribosomal subunit protein uL1 (234 aa).

The protein belongs to the universal ribosomal protein uL1 family. Part of the 50S ribosomal subunit.

In terms of biological role, binds directly to 23S rRNA. The L1 stalk is quite mobile in the ribosome, and is involved in E site tRNA release. Its function is as follows. Protein L1 is also a translational repressor protein, it controls the translation of the L11 operon by binding to its mRNA. This is Large ribosomal subunit protein uL1 from Helicobacter acinonychis (strain Sheeba).